The primary structure comprises 326 residues: Biotin synthase (326 aa).

Positions 42-266 (NEIQLAALLN…LMPKSYVRLA (225 aa)) constitute a Radical SAM core domain. Positions 57, 61, and 64 each coordinate [4Fe-4S] cluster. Residues Cys101, Cys132, Cys192, and Arg264 each coordinate [2Fe-2S] cluster.

The protein belongs to the radical SAM superfamily. Biotin synthase family. Homodimer. It depends on [4Fe-4S] cluster as a cofactor. The cofactor is [2Fe-2S] cluster.

It carries out the reaction (4R,5S)-dethiobiotin + (sulfur carrier)-SH + 2 reduced [2Fe-2S]-[ferredoxin] + 2 S-adenosyl-L-methionine = (sulfur carrier)-H + biotin + 2 5'-deoxyadenosine + 2 L-methionine + 2 oxidized [2Fe-2S]-[ferredoxin]. It functions in the pathway cofactor biosynthesis; biotin biosynthesis; biotin from 7,8-diaminononanoate: step 2/2. Catalyzes the conversion of dethiobiotin (DTB) to biotin by the insertion of a sulfur atom into dethiobiotin via a radical-based mechanism. The protein is Biotin synthase of Ehrlichia chaffeensis (strain ATCC CRL-10679 / Arkansas).